The primary structure comprises 2820 residues: Neurofibromin (2820 aa).

The residue at position 2 (Ala2) is an N-acetylalanine. Residues Ser866 and Ser878 each carry the phosphoserine modification. Positions 1253 to 1463 (HLLYQLLWNM…DLARRFFLDI (211 aa)) constitute a Ras-GAP domain. In terms of domain architecture, CRAL-TRIO spans 1561–1719 (EKEEFKALKT…ATLALEEDLK (159 aa)). The segment at 1561–1818 (EKEEFKALKT…RTRWELSQPD (258 aa)) is lipid binding. Phosphoserine is present on residues Ser2169 and Ser2448. Residues 2457 to 2482 (YPIHHGDPSSRTLKETQPWSSPRGSE) are disordered. A compositionally biased stretch (basic and acidic residues) spans 2458–2470 (PIHHGDPSSRTLK). Phosphothreonine is present on Thr2495. 4 positions are modified to phosphoserine: Ser2496, Ser2502, Ser2504, and Ser2524. Residues 2536–2552 (KRQEMESGITTPPKMRR) carry the Bipartite nuclear localization signal motif. At Thr2546 the chain carries Phosphothreonine. 3 positions are modified to phosphoserine: Ser2578, Ser2783, and Ser2798. The tract at residues 2768-2820 (TSQHSPGIDKENVELSPTTGHCNSGRTRHGSASQVQKQRSAGSFKRNSIKKIV) is disordered. Positions 2782-2808 (LSPTTGHCNSGRTRHGSASQVQKQRSA) are enriched in polar residues.

As to quaternary structure, interacts with HTR6. Interacts with SPRED2. Ubiquitinated by RNF7/RBX2, leading to its degradation.

The protein localises to the nucleus. Its subcellular location is the nucleolus. The protein resides in the cell membrane. Functionally, stimulates the GTPase activity of Ras. NF1 shows greater affinity for Ras GAP, but lower specific activity. May be a regulator of Ras activity. In Rattus norvegicus (Rat), this protein is Neurofibromin (Nf1).